Here is a 219-residue protein sequence, read N- to C-terminus: Thymidylate kinase (219 aa).

Gly-9–Thr-16 provides a ligand contact to ATP.

This sequence belongs to the thymidylate kinase family.

The catalysed reaction is dTMP + ATP = dTDP + ADP. Functionally, phosphorylation of dTMP to form dTDP in both de novo and salvage pathways of dTTP synthesis. The protein is Thymidylate kinase of Syntrophus aciditrophicus (strain SB).